Consider the following 449-residue polypeptide: Neuraminidase (449 aa).

Topologically, residues 1-6 (MNPNQK) are intravirion. Residues 7-27 (IIAIGSICMVIGIVSLMLQIG) form a helical membrane-spanning segment. Residues 11-33 (GSICMVIGIVSLMLQIGNMISIW) are involved in apical transport and lipid raft association. At 28–449 (NMISIWISHS…GAELPFTIDK (422 aa)) the chain is on the virion surface side. Positions 36–70 (HSIQTGNQRQAEPISNTKVLNEKAVASVTLAGNSS) are hypervariable stalk region. N-linked (GlcNAc...) asparagine; by host glycosylation occurs at N68. Residues 71–449 (LCPISGWAVH…GAELPFTIDK (379 aa)) are head of neuraminidase. Cystine bridges form between C72/C397, C104/C109, C164/C211, C213/C218, C259/C272, C261/C270, C298/C315, and C401/C426. R98 is a binding site for substrate. N-linked (GlcNAc...) asparagine; by host glycosylation occurs at N126. D131 acts as the Proton donor/acceptor in catalysis. Position 132 (R132) interacts with substrate. An N-linked (GlcNAc...) asparagine; by host glycan is attached at N215. 257-258 (EE) is a binding site for substrate. A substrate-binding site is contributed by R273. Ca(2+) contacts are provided by D274, G278, and D304. R348 serves as a coordination point for substrate. Y382 acts as the Nucleophile in catalysis.

Belongs to the glycosyl hydrolase 34 family. Homotetramer. It depends on Ca(2+) as a cofactor. In terms of processing, N-glycosylated.

The protein localises to the virion membrane. It localises to the host apical cell membrane. It carries out the reaction Hydrolysis of alpha-(2-&gt;3)-, alpha-(2-&gt;6)-, alpha-(2-&gt;8)- glycosidic linkages of terminal sialic acid residues in oligosaccharides, glycoproteins, glycolipids, colominic acid and synthetic substrates.. Inhibited by the neuraminidase inhibitors zanamivir (Relenza) and oseltamivir (Tamiflu). These drugs interfere with the release of progeny virus from infected cells and are effective against all influenza strains. Resistance to neuraminidase inhibitors is quite rare. Its function is as follows. Catalyzes the removal of terminal sialic acid residues from viral and cellular glycoconjugates. Cleaves off the terminal sialic acids on the glycosylated HA during virus budding to facilitate virus release. Additionally helps virus spread through the circulation by further removing sialic acids from the cell surface. These cleavages prevent self-aggregation and ensure the efficient spread of the progeny virus from cell to cell. Otherwise, infection would be limited to one round of replication. Described as a receptor-destroying enzyme because it cleaves a terminal sialic acid from the cellular receptors. May facilitate viral invasion of the upper airways by cleaving the sialic acid moieties on the mucin of the airway epithelial cells. Likely to plays a role in the budding process through its association with lipid rafts during intracellular transport. May additionally display a raft-association independent effect on budding. Plays a role in the determination of host range restriction on replication and virulence. Sialidase activity in late endosome/lysosome traffic seems to enhance virus replication. This chain is Neuraminidase, found in Aves (Cat).